Here is a 471-residue protein sequence, read N- to C-terminus: Methyltransferase OMS1, mitochondrial (471 aa).

A mitochondrion-targeting transit peptide spans 1–39 (MIVFRRFPTCLLHHIRQPASRSLLLESQRRSLSFTSYKY). The Mitochondrial matrix portion of the chain corresponds to 40 to 103 (NSSHIDDDKS…AIARSEKFSK (64 aa)). The helical transmembrane segment at 104–123 (GMTKYMIGAYVIFLIYGLFF) threads the bilayer. Over 124–471 (TKKLFAKDKE…LEPVPPVSKS (348 aa)) the chain is Mitochondrial intermembrane. Positions 450–463 (FEKKDDMASKKELE) are enriched in basic and acidic residues. The tract at residues 450–471 (FEKKDDMASKKELEPVPPVSKS) is disordered.

Belongs to the methyltransferase superfamily. METL family.

It localises to the mitochondrion inner membrane. Its function is as follows. Mitochondrial methyltransferase which suppresses respiratory defects caused by OXA1 mutations when overexpressed. This chain is Methyltransferase OMS1, mitochondrial (OMS1), found in Saccharomyces cerevisiae (strain ATCC 204508 / S288c) (Baker's yeast).